A 401-amino-acid chain; its full sequence is Tetracycline resistance protein, class B (401 aa).

At 1–6 the chain is on the cytoplasmic side; it reads MNSSTK. The helical transmembrane segment at 7-30 threads the bilayer; the sequence is IALVITLLDAMGIGLIMPVLPTLL. At 31–42 the chain is on the periplasmic side; that stretch reads REFIASEDIANH. Residues 43–61 form a helical membrane-spanning segment; the sequence is FGVLLALYALMQVIFAPWL. The Cytoplasmic portion of the chain corresponds to 62-71; sequence GKMSDRFGRR. The helical transmembrane segment at 72-91 threads the bilayer; that stretch reads PVLLLSLIGASLDYLLLAFS. Over 92 to 98 the chain is Periplasmic; that stretch reads SALWMLY. A helical membrane pass occupies residues 99–119; sequence LGRLLSGITGATGAVAASVIA. Residues 120 to 129 are Cytoplasmic-facing; sequence DTTSASQRVK. The chain crosses the membrane as a helical span at residues 130 to 152; that stretch reads WFGWLGASFGLGLIAGPIIGGFA. Residues 153–158 are Periplasmic-facing; it reads GEISPH. The helical transmembrane segment at 159 to 178 threads the bilayer; it reads SPFFIAALLNIVTFLVVMFW. Residues 179 to 211 lie on the Cytoplasmic side of the membrane; the sequence is FRETKNTRDNTDTEVGVETQSNSVYITLFKTMP. Residues 212–232 form a helical membrane-spanning segment; that stretch reads ILLIIYFSAQLIGQIPATVWV. Topologically, residues 233–243 are periplasmic; it reads LFTENRFGWNS. A helical transmembrane segment spans residues 244 to 265; sequence MMVGFSLAGLGLLHSVFQAFVA. The Cytoplasmic segment spans residues 266-275; sequence GRIATKWGEK. Residues 276 to 295 traverse the membrane as a helical segment; the sequence is TAVLLGFIADSSAFAFLAFI. Over 296–298 the chain is Periplasmic; the sequence is SEG. A helical transmembrane segment spans residues 299 to 322; it reads WLVFPVLILLAGGGIALPALQGVM. The Cytoplasmic portion of the chain corresponds to 323–332; sequence SIQTKSHQQG. Residues 333 to 356 form a helical membrane-spanning segment; sequence ALQGLLVSLTNATGVIGPLLFAVI. Residues 357-365 lie on the Periplasmic side of the membrane; sequence YNHSLPIWD. A helical membrane pass occupies residues 366–387; that stretch reads GWIWIIGLAFYCIIILLSMTFM. Over 388 to 401 the chain is Cytoplasmic; that stretch reads LTPQAQGSKQETSA.

The protein belongs to the major facilitator superfamily. TCR/Tet family.

The protein resides in the cell inner membrane. Functionally, resistance to tetracycline by an active tetracycline efflux. This is an energy-dependent process that decreases the accumulation of the antibiotic in whole cells. This protein functions as a metal-tetracycline/H(+) antiporter. The polypeptide is Tetracycline resistance protein, class B (tetA) (Escherichia coli).